The following is a 128-amino-acid chain: Modulator protein MzrA (128 aa).

Residues 1-11 are Cytoplasmic-facing; it reads MMVMKRPSLRQ. A helical transmembrane segment spans residues 12–32; it reads FSWLLGGSLLLGALFWLWLAV. Topologically, residues 33–128 are periplasmic; sequence QQQEATLAIR…RLRDAPHRLG (96 aa).

Belongs to the MzrA family. As to quaternary structure, interacts with EnvZ.

The protein resides in the cell inner membrane. In terms of biological role, modulates the activity of the EnvZ/OmpR two-component regulatory system, probably by directly modulating EnvZ enzymatic activity and increasing stability of phosphorylated OmpR. In Klebsiella pneumoniae subsp. pneumoniae (strain ATCC 700721 / MGH 78578), this protein is Modulator protein MzrA.